The sequence spans 212 residues: Probable nicotinate-nucleotide adenylyltransferase (212 aa).

This sequence belongs to the NadD family.

The enzyme catalyses nicotinate beta-D-ribonucleotide + ATP + H(+) = deamido-NAD(+) + diphosphate. It participates in cofactor biosynthesis; NAD(+) biosynthesis; deamido-NAD(+) from nicotinate D-ribonucleotide: step 1/1. Functionally, catalyzes the reversible adenylation of nicotinate mononucleotide (NaMN) to nicotinic acid adenine dinucleotide (NaAD). This is Probable nicotinate-nucleotide adenylyltransferase from Shewanella sp. (strain ANA-3).